A 90-amino-acid chain; its full sequence is Probable small nuclear ribonucleoprotein E (90 aa).

Residues Val14 to Glu89 form the Sm domain.

This sequence belongs to the snRNP Sm proteins family. In terms of assembly, core component of the spliceosomal U1, U2, U4 and U5 small nuclear ribonucleoproteins (snRNPs), the building blocks of the spliceosome.

The protein localises to the nucleus. The protein resides in the cytoplasm. It localises to the cytosol. Plays a role in pre-mRNA splicing as a core component of the spliceosomal U1, U2, U4 and U5 small nuclear ribonucleoproteins (snRNPs), the building blocks of the spliceosome. The sequence is that of Probable small nuclear ribonucleoprotein E (snr-6) from Caenorhabditis elegans.